A 477-amino-acid polypeptide reads, in one-letter code: MKVTLPEFERAGVLVVGDVMLDRYWYGPTSRISPEAPVPVVKVENIEERPGGAANVAMNIASLGATSRLVGLTGIDDAARALSQALANVNVKCDFVSVPTHPTITKLRVLSRNQQLIRLDFEEGFSGVDPQPMHERIQQALGSIGALVLSDYAKGALTSVQTMIKLAREAGVPVLIDPKGTDFERYRGATLLTPNLSEFEAVVGKCQDEAEIVERGMKLIAEFELSALLVTRSEQGMTLLQPGRPPLHMPTQAQEVYDVTGAGDTVIGVLAATLASGNTLEEACYFANAAAGVVVGKLGTSTVSPVELENAVRGRAETGFGVMSEEELKQAVAAARKRGEKVVMTNGVFDILHAGHVSYLANARKLGDRLIVAVNSDASTKRLKGETRPVNPLEQRMIVLGALEAVDWVVSFEEDTPQRLIAGILPDLLVKGGDYKPEQIAGSEEVWANGGEVLVLNFEDGCSTTNIIKKIQKDSDK.

Residues 1–318 (MKVTLPEFER…ENAVRGRAET (318 aa)) are ribokinase. Position 195–198 (195–198 (NLSE)) interacts with ATP. Asp264 is a catalytic residue. The tract at residues 344–477 (MTNGVFDILH…IKKIQKDSDK (134 aa)) is cytidylyltransferase.

This sequence in the N-terminal section; belongs to the carbohydrate kinase PfkB family. It in the C-terminal section; belongs to the cytidylyltransferase family. Homodimer.

It catalyses the reaction D-glycero-beta-D-manno-heptose 7-phosphate + ATP = D-glycero-beta-D-manno-heptose 1,7-bisphosphate + ADP + H(+). It carries out the reaction D-glycero-beta-D-manno-heptose 1-phosphate + ATP + H(+) = ADP-D-glycero-beta-D-manno-heptose + diphosphate. It participates in nucleotide-sugar biosynthesis; ADP-L-glycero-beta-D-manno-heptose biosynthesis; ADP-L-glycero-beta-D-manno-heptose from D-glycero-beta-D-manno-heptose 7-phosphate: step 1/4. The protein operates within nucleotide-sugar biosynthesis; ADP-L-glycero-beta-D-manno-heptose biosynthesis; ADP-L-glycero-beta-D-manno-heptose from D-glycero-beta-D-manno-heptose 7-phosphate: step 3/4. In terms of biological role, catalyzes the phosphorylation of D-glycero-D-manno-heptose 7-phosphate at the C-1 position to selectively form D-glycero-beta-D-manno-heptose-1,7-bisphosphate. Catalyzes the ADP transfer from ATP to D-glycero-beta-D-manno-heptose 1-phosphate, yielding ADP-D-glycero-beta-D-manno-heptose. The polypeptide is Bifunctional protein HldE (Klebsiella pneumoniae (strain 342)).